We begin with the raw amino-acid sequence, 281 residues long: Formamidopyrimidine-DNA glycosylase (281 aa).

Pro-2 functions as the Schiff-base intermediate with DNA in the catalytic mechanism. Glu-3 (proton donor) is an active-site residue. The active-site Proton donor; for beta-elimination activity is the Lys-58. 3 residues coordinate DNA: His-94, Arg-113, and Arg-156. Residues 241–281 (AVYDRVGQPCPGCDCDVARTGGIERMVQSGRSTFFCGRRQR) form an FPG-type; degenerate zinc finger. Arg-271 acts as the Proton donor; for delta-elimination activity in catalysis.

Belongs to the FPG family. In terms of assembly, monomer. Requires Zn(2+) as cofactor.

The enzyme catalyses Hydrolysis of DNA containing ring-opened 7-methylguanine residues, releasing 2,6-diamino-4-hydroxy-5-(N-methyl)formamidopyrimidine.. It catalyses the reaction 2'-deoxyribonucleotide-(2'-deoxyribose 5'-phosphate)-2'-deoxyribonucleotide-DNA = a 3'-end 2'-deoxyribonucleotide-(2,3-dehydro-2,3-deoxyribose 5'-phosphate)-DNA + a 5'-end 5'-phospho-2'-deoxyribonucleoside-DNA + H(+). Involved in base excision repair of DNA damaged by oxidation or by mutagenic agents. Acts as a DNA glycosylase that recognizes and removes damaged bases. Has a preference for oxidized purines, such as 7,8-dihydro-8-oxoguanine (8-oxoG). Has AP (apurinic/apyrimidinic) lyase activity and introduces nicks in the DNA strand. Cleaves the DNA backbone by beta-delta elimination to generate a single-strand break at the site of the removed base with both 3'- and 5'-phosphates. The protein is Formamidopyrimidine-DNA glycosylase of Rhodospirillum rubrum (strain ATCC 11170 / ATH 1.1.1 / DSM 467 / LMG 4362 / NCIMB 8255 / S1).